Here is a 374-residue protein sequence, read N- to C-terminus: Low-specificity L-threonine aldolase (374 aa).

K213 is modified (N6-(pyridoxal phosphate)lysine). The interval H354–K374 is disordered.

Belongs to the threonine aldolase family. In terms of assembly, homotetramer. Pyridoxal 5'-phosphate is required as a cofactor.

The enzyme catalyses L-threonine = acetaldehyde + glycine. The catalysed reaction is L-allo-threonine = acetaldehyde + glycine. The protein operates within amino-acid degradation; L-threonine degradation via aldolase pathway; acetaldehyde and glycine from L-threonine: step 1/1. This chain is Low-specificity L-threonine aldolase (GLY1), found in Candida albicans (Yeast).